A 352-amino-acid polypeptide reads, in one-letter code: ER-derived vesicles protein ERV41 (352 aa).

The Cytoplasmic segment spans residues 1 to 23 (MAGLKTFDAFPKTEEQYKKKSTK). Residues 24–44 (GGLTSLLTYLFLLFIAWTEFG) traverse the membrane as a helical segment. The Lumenal portion of the chain corresponds to 45–311 (EYFGGYIDQQ…FLVRLVAICS (267 aa)). A helical transmembrane segment spans residues 312–332 (FLVYCASWIFTLLDMALITIM). The Cytoplasmic portion of the chain corresponds to 333–352 (GPKWSLRYQPDDKTKGILDR). An Isoleucine-leucine motif motif is present at residues 349 to 350 (IL).

The protein belongs to the ERGIC family. Interacts with ERV46.

It localises to the endoplasmic reticulum membrane. The protein localises to the golgi apparatus membrane. The protein resides in the cytoplasmic vesicle. It is found in the COPII-coated vesicle membrane. Its function is as follows. Constituent of COPII-coated endoplasmic reticulum-derived transport vesicles. Required for efficient transport of a subset of secretory proteins to the Golgi. The C-terminal Ile-Leu motif is required for exit from the endoplasmic reticulum. Facilitates retrograde transport from the Golgi to the endoplasmic reticulum. This chain is ER-derived vesicles protein ERV41 (ERV41), found in Saccharomyces cerevisiae (strain ATCC 204508 / S288c) (Baker's yeast).